The primary structure comprises 106 residues: Large ribosomal subunit protein bL21 (106 aa).

Belongs to the bacterial ribosomal protein bL21 family. In terms of assembly, part of the 50S ribosomal subunit. Contacts protein L20.

This protein binds to 23S rRNA in the presence of protein L20. This chain is Large ribosomal subunit protein bL21, found in Coprothermobacter proteolyticus (strain ATCC 35245 / DSM 5265 / OCM 4 / BT).